A 782-amino-acid polypeptide reads, in one-letter code: Hypersensitive to pore-forming toxin protein 40 (782 aa).

Residues 138–203 enclose the Tudor; degenerate domain; it reads ESEIVPGAMY…TLFVSDQFSI (66 aa). 2 stretches are compositionally biased toward polar residues: residues 332-346 and 413-443; these read SVNP…SSSM and FEST…STIQ. Disordered regions lie at residues 332-351, 413-448, 472-492, and 617-672; these read SVNP…DCPY, FEST…NEED, IERP…NMSE, and VAQG…LEDP. Positions 617–634 are enriched in polar residues; that stretch reads VAQGSNAPKTAPNDSVNS. Basic and acidic residues predominate over residues 638-662; it reads DDIHETDKRGNHCKSVTEDPKDNKD.

Its subcellular location is the cytoplasm. The protein resides in the perinuclear region. The protein is Hypersensitive to pore-forming toxin protein 40 of Caenorhabditis elegans.